A 248-amino-acid polypeptide reads, in one-letter code: 3-deoxy-manno-octulosonate cytidylyltransferase (248 aa).

It belongs to the KdsB family.

The protein localises to the cytoplasm. The enzyme catalyses 3-deoxy-alpha-D-manno-oct-2-ulosonate + CTP = CMP-3-deoxy-beta-D-manno-octulosonate + diphosphate. Its pathway is nucleotide-sugar biosynthesis; CMP-3-deoxy-D-manno-octulosonate biosynthesis; CMP-3-deoxy-D-manno-octulosonate from 3-deoxy-D-manno-octulosonate and CTP: step 1/1. The protein operates within bacterial outer membrane biogenesis; lipopolysaccharide biosynthesis. Its function is as follows. Activates KDO (a required 8-carbon sugar) for incorporation into bacterial lipopolysaccharide in Gram-negative bacteria. In Chlorobaculum parvum (strain DSM 263 / NCIMB 8327) (Chlorobium vibrioforme subsp. thiosulfatophilum), this protein is 3-deoxy-manno-octulosonate cytidylyltransferase.